A 130-amino-acid polypeptide reads, in one-letter code: Small ribosomal subunit protein uS9 (130 aa).

The protein belongs to the universal ribosomal protein uS9 family.

The sequence is that of Small ribosomal subunit protein uS9 from Neisseria meningitidis serogroup C (strain 053442).